The following is a 130-amino-acid chain: Large ribosomal subunit protein eL32 (130 aa).

This sequence belongs to the eukaryotic ribosomal protein eL32 family.

This Pyrococcus horikoshii (strain ATCC 700860 / DSM 12428 / JCM 9974 / NBRC 100139 / OT-3) protein is Large ribosomal subunit protein eL32 (rpl32e).